A 377-amino-acid polypeptide reads, in one-letter code: Succinyl-diaminopimelate desuccinylase (377 aa).

H67 contributes to the Zn(2+) binding site. The active site involves D69. D100 lines the Zn(2+) pocket. E134 serves as the catalytic Proton acceptor. The Zn(2+) site is built by E135, E163, and H349.

It belongs to the peptidase M20A family. DapE subfamily. Homodimer. Zn(2+) serves as cofactor. The cofactor is Co(2+).

It carries out the reaction N-succinyl-(2S,6S)-2,6-diaminopimelate + H2O = (2S,6S)-2,6-diaminopimelate + succinate. It functions in the pathway amino-acid biosynthesis; L-lysine biosynthesis via DAP pathway; LL-2,6-diaminopimelate from (S)-tetrahydrodipicolinate (succinylase route): step 3/3. Catalyzes the hydrolysis of N-succinyl-L,L-diaminopimelic acid (SDAP), forming succinate and LL-2,6-diaminopimelate (DAP), an intermediate involved in the bacterial biosynthesis of lysine and meso-diaminopimelic acid, an essential component of bacterial cell walls. The chain is Succinyl-diaminopimelate desuccinylase from Actinobacillus pleuropneumoniae serotype 5b (strain L20).